Here is a 277-residue protein sequence, read N- to C-terminus: Type IV methyl-directed restriction enzyme EcoKMcrA (277 aa).

An HNH domain is found at Cys207–Tyr257.

Functionally, restriction of 5-methyl and 5-hydroxymethylcytosines at the specific DNA sequence 5'-C(me)CGG-3'. This chain is Type IV methyl-directed restriction enzyme EcoKMcrA, found in Escherichia coli (strain K12).